Reading from the N-terminus, the 136-residue chain is Holo-[acyl-carrier-protein] synthase (136 aa).

Residues aspartate 8 and glutamate 57 each coordinate Mg(2+).

The protein belongs to the P-Pant transferase superfamily. AcpS family. The cofactor is Mg(2+).

The protein resides in the cytoplasm. The enzyme catalyses apo-[ACP] + CoA = holo-[ACP] + adenosine 3',5'-bisphosphate + H(+). Functionally, transfers the 4'-phosphopantetheine moiety from coenzyme A to a Ser of acyl-carrier-protein. This Methylorubrum populi (strain ATCC BAA-705 / NCIMB 13946 / BJ001) (Methylobacterium populi) protein is Holo-[acyl-carrier-protein] synthase.